The primary structure comprises 89 residues: Protein RALF-like 5 (89 aa).

Residues 1-25 (MLKAQVFMFVTVLVFVCVFINSNDA) form the signal peptide. Disulfide bonds link Cys-39-Cys-48 and Cys-61-Cys-67.

It belongs to the plant rapid alkalinization factor (RALF) family.

It is found in the secreted. Its function is as follows. Cell signaling peptide that may regulate plant stress, growth, and development. Mediates a rapid alkalinization of extracellular space by mediating a transient increase in the cytoplasmic Ca(2+) concentration leading to a calcium-dependent signaling events through a cell surface receptor and a concomitant activation of some intracellular mitogen-activated protein kinases. This Arabidopsis thaliana (Mouse-ear cress) protein is Protein RALF-like 5 (RALFL5).